Here is a 94-residue protein sequence, read N- to C-terminus: Probable Fe(2+)-trafficking protein (94 aa).

This sequence belongs to the Fe(2+)-trafficking protein family.

In terms of biological role, could be a mediator in iron transactions between iron acquisition and iron-requiring processes, such as synthesis and/or repair of Fe-S clusters in biosynthetic enzymes. The polypeptide is Probable Fe(2+)-trafficking protein (Marinomonas sp. (strain MWYL1)).